A 165-amino-acid polypeptide reads, in one-letter code: Type VI lipase immunity protein Tli3 (165 aa).

The first 21 residues, 1–21 (MKCKTLLIACLFGLGSAQALA), serve as a signal peptide directing secretion.

In terms of assembly, interacts with the Tle3 toxin.

It is found in the periplasm. Functionally, immunity protein that neutralizes the toxicity of the P.aeruginosa antibacterial toxin Tle3 in the periplasm to protect the cell from fratricide intoxication. This chain is Type VI lipase immunity protein Tli3, found in Pseudomonas aeruginosa (strain ATCC 15692 / DSM 22644 / CIP 104116 / JCM 14847 / LMG 12228 / 1C / PRS 101 / PAO1).